Consider the following 296-residue polypeptide: Ribosomal RNA small subunit methyltransferase A (296 aa).

Residues Asn-28, Leu-30, Gly-55, Glu-77, Asp-103, and Asn-122 each contribute to the S-adenosyl-L-methionine site.

This sequence belongs to the class I-like SAM-binding methyltransferase superfamily. rRNA adenine N(6)-methyltransferase family. RsmA subfamily.

It localises to the cytoplasm. The enzyme catalyses adenosine(1518)/adenosine(1519) in 16S rRNA + 4 S-adenosyl-L-methionine = N(6)-dimethyladenosine(1518)/N(6)-dimethyladenosine(1519) in 16S rRNA + 4 S-adenosyl-L-homocysteine + 4 H(+). In terms of biological role, specifically dimethylates two adjacent adenosines (A1518 and A1519) in the loop of a conserved hairpin near the 3'-end of 16S rRNA in the 30S particle. May play a critical role in biogenesis of 30S subunits. This is Ribosomal RNA small subunit methyltransferase A from Sinorhizobium fredii (strain NBRC 101917 / NGR234).